The primary structure comprises 415 residues: Serine hydroxymethyltransferase (415 aa).

(6S)-5,6,7,8-tetrahydrofolate is bound by residues leucine 122 and 126–128; that span reads GHL. An N6-(pyridoxal phosphate)lysine modification is found at lysine 230.

Belongs to the SHMT family. In terms of assembly, homodimer. Pyridoxal 5'-phosphate is required as a cofactor.

It is found in the cytoplasm. It carries out the reaction (6R)-5,10-methylene-5,6,7,8-tetrahydrofolate + glycine + H2O = (6S)-5,6,7,8-tetrahydrofolate + L-serine. It participates in one-carbon metabolism; tetrahydrofolate interconversion. Its pathway is amino-acid biosynthesis; glycine biosynthesis; glycine from L-serine: step 1/1. Its function is as follows. Catalyzes the reversible interconversion of serine and glycine with tetrahydrofolate (THF) serving as the one-carbon carrier. This reaction serves as the major source of one-carbon groups required for the biosynthesis of purines, thymidylate, methionine, and other important biomolecules. Also exhibits THF-independent aldolase activity toward beta-hydroxyamino acids, producing glycine and aldehydes, via a retro-aldol mechanism. This Ralstonia pickettii (strain 12J) protein is Serine hydroxymethyltransferase.